A 203-amino-acid chain; its full sequence is RNA chaperone ProQ (203 aa).

Residues 111–138 are disordered; sequence KAKRQALAPKKPAKKVAPKRAPAVKKER.

Belongs to the ProQ family.

Its subcellular location is the cytoplasm. Its function is as follows. RNA chaperone with significant RNA binding, RNA strand exchange and RNA duplexing activities. In Shewanella frigidimarina (strain NCIMB 400), this protein is RNA chaperone ProQ.